The chain runs to 134 residues: ATP synthase epsilon chain (134 aa).

The protein belongs to the ATPase epsilon chain family. F-type ATPases have 2 components, CF(1) - the catalytic core - and CF(0) - the membrane proton channel. CF(1) has five subunits: alpha(3), beta(3), gamma(1), delta(1), epsilon(1). CF(0) has three main subunits: a, b and c.

The protein resides in the cellular thylakoid membrane. In terms of biological role, produces ATP from ADP in the presence of a proton gradient across the membrane. This chain is ATP synthase epsilon chain, found in Prochlorococcus marinus (strain MIT 9515).